A 283-amino-acid polypeptide reads, in one-letter code: Bifunctional protein FolD (283 aa).

Residues 164 to 166 (GRS), S189, and I230 each bind NADP(+).

Belongs to the tetrahydrofolate dehydrogenase/cyclohydrolase family. Homodimer.

It carries out the reaction (6R)-5,10-methylene-5,6,7,8-tetrahydrofolate + NADP(+) = (6R)-5,10-methenyltetrahydrofolate + NADPH. The enzyme catalyses (6R)-5,10-methenyltetrahydrofolate + H2O = (6R)-10-formyltetrahydrofolate + H(+). It participates in one-carbon metabolism; tetrahydrofolate interconversion. Functionally, catalyzes the oxidation of 5,10-methylenetetrahydrofolate to 5,10-methenyltetrahydrofolate and then the hydrolysis of 5,10-methenyltetrahydrofolate to 10-formyltetrahydrofolate. This Lactobacillus delbrueckii subsp. bulgaricus (strain ATCC BAA-365 / Lb-18) protein is Bifunctional protein FolD.